A 131-amino-acid chain; its full sequence is Large ribosomal subunit protein bL19 (131 aa).

The segment at 107 to 131 (GKSARIAERAERGSDKGKAAPAAAE) is disordered. Residues 111–124 (RIAERAERGSDKGK) are compositionally biased toward basic and acidic residues.

This sequence belongs to the bacterial ribosomal protein bL19 family.

Its function is as follows. This protein is located at the 30S-50S ribosomal subunit interface and may play a role in the structure and function of the aminoacyl-tRNA binding site. The polypeptide is Large ribosomal subunit protein bL19 (Methylobacterium sp. (strain 4-46)).